We begin with the raw amino-acid sequence, 648 residues long: 60 kDa heat shock protein homolog 1, mitochondrial (648 aa).

The transit peptide at 1-55 (MFRSCVPKAITSSRCFARMYSKDVRFGSGVRAMMIRGVDILADAVAVTMGPKGRS) directs the protein to the mitochondrion.

This sequence belongs to the chaperonin (HSP60) family.

It is found in the mitochondrion matrix. In terms of biological role, prevents misfolding and promotes the refolding and proper assembly of unfolded polypeptides generated under stress conditions. The polypeptide is 60 kDa heat shock protein homolog 1, mitochondrial (Hsp60B) (Drosophila melanogaster (Fruit fly)).